A 107-amino-acid chain; its full sequence is UPF0102 protein CTN_0433 (107 aa).

It belongs to the UPF0102 family.

The protein is UPF0102 protein CTN_0433 of Thermotoga neapolitana (strain ATCC 49049 / DSM 4359 / NBRC 107923 / NS-E).